A 410-amino-acid chain; its full sequence is Probable peptidoglycan glycosyltransferase FtsW (410 aa).

9 consecutive transmembrane segments (helical) span residues 39 to 59, 78 to 98, 108 to 128, 177 to 197, 198 to 218, 221 to 241, 303 to 323, 342 to 362, and 374 to 394; these read LDPLLIWSATGLLLIGLVMVY, YFLLRHAMFLAVGIGAGLAAF, FAPWLFLIGVMLLVVVLIPGV, GFLPMAAMILLVGFLLLGEPD, FGAFVVITAIAFGVLFLGGIN, VFALLALVAVIGFMLLIWLSP, IAEELGFAGVLTVIALFAILI, GLVAMGIGLWLGVQSFINMGV, and LPLMSFGGSGIVANCLALAIL.

It belongs to the SEDS family. FtsW subfamily.

Its subcellular location is the cell inner membrane. It carries out the reaction [GlcNAc-(1-&gt;4)-Mur2Ac(oyl-L-Ala-gamma-D-Glu-L-Lys-D-Ala-D-Ala)](n)-di-trans,octa-cis-undecaprenyl diphosphate + beta-D-GlcNAc-(1-&gt;4)-Mur2Ac(oyl-L-Ala-gamma-D-Glu-L-Lys-D-Ala-D-Ala)-di-trans,octa-cis-undecaprenyl diphosphate = [GlcNAc-(1-&gt;4)-Mur2Ac(oyl-L-Ala-gamma-D-Glu-L-Lys-D-Ala-D-Ala)](n+1)-di-trans,octa-cis-undecaprenyl diphosphate + di-trans,octa-cis-undecaprenyl diphosphate + H(+). It functions in the pathway cell wall biogenesis; peptidoglycan biosynthesis. Functionally, peptidoglycan polymerase that is essential for cell division. This Aromatoleum aromaticum (strain DSM 19018 / LMG 30748 / EbN1) (Azoarcus sp. (strain EbN1)) protein is Probable peptidoglycan glycosyltransferase FtsW.